Consider the following 301-residue polypeptide: GTPase Era (301 aa).

The region spanning Tyr7–Glu175 is the Era-type G domain. Residues Gly15–Ser22 are G1. Residue Gly15 to Ser22 coordinates GTP. Residues Gln41–His45 are G2. Positions Asp62–Gly65 are G3. GTP-binding positions include Asp62 to Leu66 and Asn124 to Asp127. Residues Asn124–Asp127 are G4. The G5 stretch occupies residues Ile154–Ala156. Positions Leu206 to Ser283 constitute a KH type-2 domain.

This sequence belongs to the TRAFAC class TrmE-Era-EngA-EngB-Septin-like GTPase superfamily. Era GTPase family. Monomer.

Its subcellular location is the cytoplasm. It is found in the cell inner membrane. In terms of biological role, an essential GTPase that binds both GDP and GTP, with rapid nucleotide exchange. Plays a role in 16S rRNA processing and 30S ribosomal subunit biogenesis and possibly also in cell cycle regulation and energy metabolism. This chain is GTPase Era, found in Klebsiella pneumoniae subsp. pneumoniae (strain ATCC 700721 / MGH 78578).